We begin with the raw amino-acid sequence, 247 residues long: UPF0280 protein MmarC6_1437 (247 aa).

The protein belongs to the UPF0280 family.

This chain is UPF0280 protein MmarC6_1437, found in Methanococcus maripaludis (strain C6 / ATCC BAA-1332).